The primary structure comprises 505 residues: ATP synthase subunit alpha, chloroplastic (505 aa).

170–177 (GDRQTGKT) lines the ATP pocket.

It belongs to the ATPase alpha/beta chains family. F-type ATPases have 2 components, CF(1) - the catalytic core - and CF(0) - the membrane proton channel. CF(1) has five subunits: alpha(3), beta(3), gamma(1), delta(1), epsilon(1). CF(0) has four main subunits: a, b, b' and c.

The protein localises to the plastid. The protein resides in the chloroplast thylakoid membrane. It carries out the reaction ATP + H2O + 4 H(+)(in) = ADP + phosphate + 5 H(+)(out). Produces ATP from ADP in the presence of a proton gradient across the membrane. The alpha chain is a regulatory subunit. This is ATP synthase subunit alpha, chloroplastic from Carica papaya (Papaya).